Consider the following 98-residue polypeptide: ESAT-6-like protein EsxW (98 aa).

The protein belongs to the WXG100 family. CFP-10 subfamily. As to quaternary structure, forms a tight 1:1 complex with EsxV. The complex is destabilized at low pH. Unfolding of the proteins is required for dissociation of the complex and membrane binding.

The protein resides in the secreted. This is ESAT-6-like protein EsxW from Mycobacterium tuberculosis (strain ATCC 25618 / H37Rv).